A 241-amino-acid chain; its full sequence is DNA repair protein RecO (241 aa).

This sequence belongs to the RecO family.

Its function is as follows. Involved in DNA repair and RecF pathway recombination. The protein is DNA repair protein RecO of Rickettsia canadensis (strain McKiel).